Reading from the N-terminus, the 171-residue chain is 3-hydroxydecanoyl-[acyl-carrier-protein] dehydratase (171 aa).

H69 is a catalytic residue.

This sequence belongs to the thioester dehydratase family. FabA subfamily. In terms of assembly, homodimer.

Its subcellular location is the cytoplasm. It catalyses the reaction a (3R)-hydroxyacyl-[ACP] = a (2E)-enoyl-[ACP] + H2O. It carries out the reaction (3R)-hydroxydecanoyl-[ACP] = (2E)-decenoyl-[ACP] + H2O. The enzyme catalyses (2E)-decenoyl-[ACP] = (3Z)-decenoyl-[ACP]. The protein operates within lipid metabolism; fatty acid biosynthesis. In terms of biological role, necessary for the introduction of cis unsaturation into fatty acids. Catalyzes the dehydration of (3R)-3-hydroxydecanoyl-ACP to E-(2)-decenoyl-ACP and then its isomerization to Z-(3)-decenoyl-ACP. Can catalyze the dehydratase reaction for beta-hydroxyacyl-ACPs with saturated chain lengths up to 16:0, being most active on intermediate chain length. The protein is 3-hydroxydecanoyl-[acyl-carrier-protein] dehydratase of Caulobacter sp. (strain K31).